The sequence spans 132 residues: MDYAFLPPEINSARMYSGPGPNSMLVAAASWDALAAELASAAENYGSVIARLTGMHWWGPASTSMLAMSAPYVEWLERTAAQTKQTATQARAAAAAFEQAHAMTVPPALVTGIRGAIVVETASASNTAGTPP.

It belongs to the mycobacterial PPE family.

This is an uncharacterized protein from Mycobacterium tuberculosis (strain ATCC 25618 / H37Rv).